The sequence spans 820 residues: Penicillin-binding protein 1A (820 aa).

The tract at residues 1–120 is disordered; the sequence is MNSDGRHHQS…PAGRLPQPRV (120 aa). Positions 41–53 are enriched in basic and acidic residues; sequence TDDRSAPHADSIE. The helical transmembrane segment at 139 to 159 threads the bilayer; it reads LTAAVVILLPMVTFTMAYLIV. The transglycosylase stretch occupies residues 180–360; it reads GSEIAKIVPP…RWNWVLDGMV (181 aa). Glu-213 acts as the Proton donor; for transglycosylase activity in catalysis. Residues 453–743 are transpeptidase; it reads AVVSIDPHNG…PSDIWKATMD (291 aa). The active-site Acyl-ester intermediate; for transpeptidase activity is the Ser-487. Residues 792-804 show a composition bias toward low complexity; sequence ITIPIGPPTTITL. Positions 792-820 are disordered; the sequence is ITIPIGPPTTITLAPPPPAPPAATPTPPP. The span at 805–820 shows a compositional bias: pro residues; the sequence is APPPPAPPAATPTPPP.

The protein in the N-terminal section; belongs to the glycosyltransferase 51 family. It in the C-terminal section; belongs to the transpeptidase family. As to quaternary structure, interacts with RipA via its transpeptidase domain (residues 561-820).

The protein resides in the cell membrane. It catalyses the reaction [GlcNAc-(1-&gt;4)-Mur2Ac(oyl-L-Ala-gamma-D-Glu-L-Lys-D-Ala-D-Ala)](n)-di-trans,octa-cis-undecaprenyl diphosphate + beta-D-GlcNAc-(1-&gt;4)-Mur2Ac(oyl-L-Ala-gamma-D-Glu-L-Lys-D-Ala-D-Ala)-di-trans,octa-cis-undecaprenyl diphosphate = [GlcNAc-(1-&gt;4)-Mur2Ac(oyl-L-Ala-gamma-D-Glu-L-Lys-D-Ala-D-Ala)](n+1)-di-trans,octa-cis-undecaprenyl diphosphate + di-trans,octa-cis-undecaprenyl diphosphate + H(+). The catalysed reaction is Preferential cleavage: (Ac)2-L-Lys-D-Ala-|-D-Ala. Also transpeptidation of peptidyl-alanyl moieties that are N-acyl substituents of D-alanine.. Its pathway is cell wall biogenesis; peptidoglycan biosynthesis. Functionally, cell wall formation. Synthesis of cross-linked peptidoglycan from the lipid intermediates. The enzyme has a penicillin-insensitive transglycosylase N-terminal domain (formation of linear glycan strands) and a penicillin-sensitive transpeptidase C-terminal domain (cross-linking of the peptide subunits). Has little peptidoglycan hydrolytic activity; however it inhibits the synergistic peptidoglycan hydrolysis of RipA plus RpfB. In Mycobacterium tuberculosis (strain ATCC 25618 / H37Rv), this protein is Penicillin-binding protein 1A (ponA1).